We begin with the raw amino-acid sequence, 696 residues long: MKAPIPHLILLYATFTQSLKVVTKRGSADGCTDWSVDIKKYQVLVGEPVRIKCALFYGYIRTNYTLAQSAGLSLMWYKSSGPGDFEEPIAFDGSRMSKEEDSIWFRPTLLQDSGLYACVIRNSTYCMKVSISLTVGENDTGLCYNSKMKYFEKAELSKSKEISCRDIEDFLLPTREPEILWYKECRTKTWRPSIVFKRDTLLIKEVKEDDIGNYTCELKYGGFVVRRTTELTVTAPLTDKPPKLLYPMESKLTIQETQLGGSANLTCRAFFGYSGDVSPLIYWMKGEKFIEDLDENRVWESDIRILKEHLGEQEVSISLIVDSVEEGDLGNYSCYVENGNGRRHASVLLHKRELMYTVELAGGLGAILLLLVCSVTIYKCYKIEIMLFYRNHFGAEELDGDNKDYDAYLSYTKVDPDQWNQETGEEERFALEILPDMLEKHYGYKLFIPDRDLIPTGTYIEDVARCVDQSKRLIIVMTPNYVVRRGWSIFELETRLRNMLVTGEIKVILIECSELRGIMNYQEVEALKHTIKLLTVIKWHGPKCNKLNSKFWKRLQYEMPFKRIEPITHEQALDVSEQGPFGELQTVSAISMAAATSTALATAHPDLRSTFHNTYHSQMRQKHYYRSYEYDVPPTGTLPLTSIGNQHTYCNIPMTLINGQRPQTKSSREPNPDEAHTNSAILPLLARETSISSVIW.

The first 24 residues, 1 to 24 (MKAPIPHLILLYATFTQSLKVVTK), serve as a signal peptide directing secretion. One can recognise an Ig-like C2-type 1 domain in the interval 25–134 (RGSADGCTDW…YCMKVSISLT (110 aa)). The Extracellular portion of the chain corresponds to 25-357 (RGSADGCTDW…LLHKRELMYT (333 aa)). 2 disulfide bridges follow: cysteine 31/cysteine 126 and cysteine 53/cysteine 118. 3 N-linked (GlcNAc...) asparagine glycosylation sites follow: asparagine 63, asparagine 122, and asparagine 138. Disulfide bonds link cysteine 143–cysteine 185 and cysteine 164–cysteine 216. 2 consecutive Ig-like C2-type domains span residues 143-232 (CYNS…TELT) and 242-350 (PKLL…VLLH). N-linked (GlcNAc...) asparagine glycosylation is found at asparagine 213, asparagine 264, and asparagine 331. A disulfide bond links cysteine 267 and cysteine 334. Residues 358-378 (VELAGGLGAILLLLVCSVTIY) traverse the membrane as a helical segment. The Cytoplasmic portion of the chain corresponds to 379–696 (KCYKIEIMLF…RETSISSVIW (318 aa)). The TIR domain occupies 403–559 (KDYDAYLSYT…KFWKRLQYEM (157 aa)). Glutamate 491 is an active-site residue. Positions 549-644 (SKFWKRLQYE…TGTLPLTSIG (96 aa)) are interaction with NCS1. The tract at residues 659–680 (GQRPQTKSSREPNPDEAHTNSA) is disordered. Residues 666-676 (SSREPNPDEAH) show a composition bias toward basic and acidic residues.

It belongs to the interleukin-1 receptor family. Homodimer. Interacts (calcium-independent) with NCS1/FREQ. Interacts (via the first immunoglobilin domain) with PTPRD (via the second immunoglobilin domain); this interaction is PTPRD-splicing-dependent and induces pre- and post-synaptic differentiation of neurons and is required for IL1RAPL1-mediated synapse formation.

Its subcellular location is the cell membrane. The protein localises to the cytoplasm. The protein resides in the cell projection. It localises to the axon. It is found in the dendrite. The enzyme catalyses NAD(+) + H2O = ADP-D-ribose + nicotinamide + H(+). Its function is as follows. May regulate secretion and presynaptic differentiation through inhibition of the activity of N-type voltage-gated calcium channel. May activate the MAP kinase JNK. Plays a role in neurite outgrowth. During dendritic spine formation can bidirectionally induce pre- and post-synaptic differentiation of neurons by trans-synaptically binding to PTPRD. The protein is Interleukin-1 receptor accessory protein-like 1 (Il1rapl1) of Rattus norvegicus (Rat).